The primary structure comprises 804 residues: MKRKERRINKDYGYNRKCVCHYEASQKRFCYSQYSCASVLYERVRDIAKIIDRLDSGLDAWCLRDAIISVLRATHCVPRVDRMLGRWYLKTSVFYDFCPDDLILSCPNVIMPNVLNFVKKYRDFIRSVLYKVSVSWKNQYMPGVLAASRFLEEISNSLNGVEESIPCIYLRMCATLTEIVLRIGYLREIYQENPYVMFEELAFSLFTQKWVLPFSCMTNLGLVEKANSTVFDVAIYNTCLYSLVDFTIVNGEHLFPALLNGSNISMNLTRYQQEAKNIFEILLSQIRVVERDTDKTVQLTVYVEVWHVSALMWLDLYEALPQTSRVTFCLIIPGIFMDRYELKRAQWSLFHKNIAFELGKCDEITFSTKYLEFERTTDHAKITMSSFIEKICLCLKGGRMGLIFRKNVYQYSMIPHVPLYCGGDFLDVLPVRDGINTCMRMLLNVVHFLGDEVSDELTEEIDFVRLQCKFFMFNELRRVVRKMVLVANAVIDYAVENKDFLCEGIEDGRSLGICVTGLHSVFMTVGLSYAHPDARRLYRMICEHIYYTCVRTSVDCCMKGAEPCNLFDRSKYALGMLYFDHFDNVECTLPEELWTTLRKDVLMHGVRNIHFTAGTAMQKEFDIINSSESFWPMEDNKILRRSNIKVVIGKDGLNDVTSVYSSELKSLYIPVYNNLLLNRFNKHQQYLKTVGYRVLNVDTNLFTDKELDDLAVFKDGFSYHLNDLIEMYKSGLPFLDQGQANVFYFNDTVSLRLLLPLLYKAGFKVAMYKVLCNSEMYKHLDLSNPLPLIGKCSDGVVMHVKNIL.

This sequence belongs to the ribonucleoside diphosphate reductase large chain family.

The protein localises to the virion. The protein resides in the host cytoplasm. In terms of biological role, does not possess a ribonucleotide reductase activity. Betaherpesviruses probably use another strategy to expand the dNTP pool in a quiescent host cell. The polypeptide is Ribonucleoside-diphosphate reductase large subunit-like protein (Homo sapiens (Human)).